The primary structure comprises 186 residues: Tumor necrosis factor alpha-induced protein 8-like protein 2 (186 aa).

Belongs to the TNFAIP8 family. TNFAIP8L2 subfamily.

Acts as a negative regulator of innate and adaptive immunity by maintaining immune homeostasis. Negative regulator of Toll-like receptor and T-cell receptor function. Prevents hyperresponsiveness of the immune system and maintains immune homeostasis. Inhibits jun/ap1 and NF-kappa-B activation. Promotes Fas-induced apoptosis. The sequence is that of Tumor necrosis factor alpha-induced protein 8-like protein 2 (tnfaip8l2) from Xenopus laevis (African clawed frog).